The primary structure comprises 363 residues: Phosphoserine aminotransferase (363 aa).

Residue Arg-42 coordinates L-glutamate. Residues 76–77 (AS), Trp-101, Thr-151, Asp-170, and Gln-193 contribute to the pyridoxal 5'-phosphate site. Lys-194 is subject to N6-(pyridoxal phosphate)lysine. 234-235 (NT) is a pyridoxal 5'-phosphate binding site.

It belongs to the class-V pyridoxal-phosphate-dependent aminotransferase family. SerC subfamily. In terms of assembly, homodimer. The cofactor is pyridoxal 5'-phosphate.

Its subcellular location is the cytoplasm. The catalysed reaction is O-phospho-L-serine + 2-oxoglutarate = 3-phosphooxypyruvate + L-glutamate. The enzyme catalyses 4-(phosphooxy)-L-threonine + 2-oxoglutarate = (R)-3-hydroxy-2-oxo-4-phosphooxybutanoate + L-glutamate. The protein operates within amino-acid biosynthesis; L-serine biosynthesis; L-serine from 3-phospho-D-glycerate: step 2/3. Functionally, catalyzes the reversible conversion of 3-phosphohydroxypyruvate to phosphoserine and of 3-hydroxy-2-oxo-4-phosphonooxybutanoate to phosphohydroxythreonine. The chain is Phosphoserine aminotransferase from Listeria innocua serovar 6a (strain ATCC BAA-680 / CLIP 11262).